The following is a 352-amino-acid chain: MQTYGNPDVTYGWWVGNSVVTNRAGRFIGSHVGHTGIICFATGASCLWELSRFDSSVPMGHQSSIYLSHLASLGIGFDEAGVWTGAGVATIAIFHLIFSMVYGGAGLAHSLFFDPDLNEGPIGRVDKFKLEWDNPNNLTFILGHHLIFLGVANIWFVEWARVHGIYDPALGEVRTIFPGYGDFGMVWGHQFDFIKIDSLEDVMSGHAFLAFLQISGGAFHIATRQIGEYTKFKGDGLLSAEAVLSWSLAGLFLMGVVAAFWAASNTTVYPTEWYGEPLEFKFGISPYWADTGDTSDCKYFFGHTSRAALVNVQYYFAFFCLQGHLWHALRALGFDFRRIAKAIGGLTESTSS.

A run of 6 helical transmembrane segments spans residues 27–47, 88–108, 140–160, 202–222, 242–262, and 309–329; these read FIGSHVGHTGIICFATGASCL, VATIAIFHLIFSMVYGGAGLA, FILGHHLIFLGVANIWFVEWA, VMSGHAFLAFLQISGGAFHIA, AVLSWSLAGLFLMGVVAAFWA, and LVNVQYYFAFFCLQGHLWHAL.

The protein belongs to the PsbB/PsbC family. IsiA/Pcb subfamily. As to quaternary structure, the antenna complex consists of divinyl chlorophylls (a and b) and divinyl chlorophyll a/b binding proteins and binds more divinyl chlorophyll b than does the antenna complex from high-light-adapted Prochlorococcus. Requires divinyl chlorophyll a as cofactor. Divinyl chlorophyll b is required as a cofactor.

It is found in the cellular thylakoid membrane. Its function is as follows. The antenna complex functions as a light receptor, it captures and delivers excitation energy to photosystems II and I. The Prochlorales pcb genes are not related to higher plant LHCs. The chain is Divinyl chlorophyll a/b light-harvesting protein PcbH (pcbH) from Prochlorococcus marinus (strain SARG / CCMP1375 / SS120).